The primary structure comprises 164 residues: R-phycoerythrin alpha chain (164 aa).

(2R,3E)-phycoerythrobilin-binding residues include asparagine 47, lysine 81, cysteine 82, arginine 84, histidine 88, arginine 137, cysteine 139, and arginine 142.

It belongs to the phycobiliprotein family. As to quaternary structure, heterododecamer of 6 alpha and 6 beta chains. The basic functional unit of phycobiliproteins is a ring-shaped hexamer formed from two back-to-back trimers contacting via the alpha chain subunits. The trimers are composed of alpha/beta subunit heterodimers arranged around a three-fold axis of symmetry. The phycoerythrins also contain a gamma subunit which is located in the center of the hexamer. Post-translationally, contains two covalently linked phycoerythrobilin chromophores. In PubMed:8876649 the authors refer to the bilins as phycoerythrobilins. In the PDB entries, the bilins are named as phycocyanobilins although the modeled compounds correspond to phycoerythrobilins.

It localises to the plastid. It is found in the chloroplast thylakoid membrane. Functionally, light-harvesting photosynthetic tetrapyrrole chromophore-protein from the phycobiliprotein complex. The polypeptide is R-phycoerythrin alpha chain (cpeA) (Polysiphonia urceolata (Red alga)).